A 119-amino-acid polypeptide reads, in one-letter code: Phosphoribosyl-AMP cyclohydrolase (119 aa).

Asp-77 contacts Mg(2+). Position 78 (Cys-78) interacts with Zn(2+). Mg(2+) is bound by residues Asp-79 and Asp-81. Positions 94 and 101 each coordinate Zn(2+).

The protein belongs to the PRA-CH family. As to quaternary structure, homodimer. Mg(2+) is required as a cofactor. The cofactor is Zn(2+).

The protein resides in the cytoplasm. The catalysed reaction is 1-(5-phospho-beta-D-ribosyl)-5'-AMP + H2O = 1-(5-phospho-beta-D-ribosyl)-5-[(5-phospho-beta-D-ribosylamino)methylideneamino]imidazole-4-carboxamide. Its pathway is amino-acid biosynthesis; L-histidine biosynthesis; L-histidine from 5-phospho-alpha-D-ribose 1-diphosphate: step 3/9. Its function is as follows. Catalyzes the hydrolysis of the adenine ring of phosphoribosyl-AMP. In Cereibacter sphaeroides (strain ATCC 17029 / ATH 2.4.9) (Rhodobacter sphaeroides), this protein is Phosphoribosyl-AMP cyclohydrolase.